Reading from the N-terminus, the 695-residue chain is Testis-specific Y-encoded-like protein 2 (695 aa).

The disordered stretch occupies residues 1–56 (MDRPDEGPPAKTRRLSSSESPQRDPPPPPPPPPLLRLPLPPPQQRPRLQEETEAAQ). Residue Lys-11 forms a Glycyl lysine isopeptide (Lys-Gly) (interchain with G-Cter in SUMO2) linkage. 2 positions are modified to phosphoserine: Ser-18 and Ser-20. Pro residues predominate over residues 23-44 (RDPPPPPPPPPLLRLPLPPPQQ). Residues Lys-163 and Lys-165 each participate in a glycyl lysine isopeptide (Lys-Gly) (interchain with G-Cter in SUMO2) cross-link. A disordered region spans residues 175–207 (EDEDEQESMRSSRRRRRRRRRKQRKVKRESRQR). A compositionally biased stretch (basic residues) spans 185–202 (SSRRRRRRRRRKQRKVKR). Thr-340 carries the post-translational modification Phosphothreonine. Disordered regions lie at residues 471 to 603 (DINE…RDIE) and 632 to 695 (VEEE…GKTG). A compositionally biased stretch (basic and acidic residues) spans 481 to 491 (SPDHDEVRNET). Residues 496-518 (ESADDNETTDNNESADDNNENPE) show a composition bias toward acidic residues. Positions 519–535 (DNNKNADDNKENPDNNK) are enriched in basic and acidic residues. Residues 539–557 (GNNFFNGGFWGSHGNNQDS) show a composition bias toward low complexity. Acidic residues-rich tracts occupy residues 558 to 601 (SDSD…DDRD) and 632 to 677 (VEEE…DLED). Residues Ser-670 and Ser-673 each carry the phosphoserine modification.

Belongs to the nucleosome assembly protein (NAP) family. As to quaternary structure, interacts with histones. Interacts with CASK. Part of a complex containing CASK, TBR1 and TSPYL2. Phosphorylation at Ser-20 and/or Thr-340 impairs function on cell proliferation. In terms of tissue distribution, ubiquitously expressed, with highest levels in testis, adrenal gland, cerebral cortex, ovary, skeletal muscle and spleen. Present in testis, adrenal gland, cerebral cortex and ovary (at protein level).

Its subcellular location is the nucleus. It is found in the cytoplasm. In terms of biological role, part of the CASK/TBR1/TSPYL2 transcriptional complex which modulates gene expression in response to neuronal synaptic activity, probably by facilitating nucleosome assembly. May inhibit cell proliferation by inducing p53-dependent CDKN1A expression. This chain is Testis-specific Y-encoded-like protein 2 (TSPYL2), found in Macaca fascicularis (Crab-eating macaque).